The sequence spans 132 residues: Phosphoribosyl-AMP cyclohydrolase (132 aa).

Mg(2+) is bound at residue aspartate 79. A Zn(2+)-binding site is contributed by cysteine 80. Positions 81 and 83 each coordinate Mg(2+). Positions 100 and 107 each coordinate Zn(2+).

Belongs to the PRA-CH family. Homodimer. Requires Mg(2+) as cofactor. The cofactor is Zn(2+).

It is found in the cytoplasm. It carries out the reaction 1-(5-phospho-beta-D-ribosyl)-5'-AMP + H2O = 1-(5-phospho-beta-D-ribosyl)-5-[(5-phospho-beta-D-ribosylamino)methylideneamino]imidazole-4-carboxamide. It participates in amino-acid biosynthesis; L-histidine biosynthesis; L-histidine from 5-phospho-alpha-D-ribose 1-diphosphate: step 3/9. Its function is as follows. Catalyzes the hydrolysis of the adenine ring of phosphoribosyl-AMP. The chain is Phosphoribosyl-AMP cyclohydrolase from Acidovorax sp. (strain JS42).